The chain runs to 614 residues: UvrABC system protein C (614 aa).

One can recognise a GIY-YIG domain in the interval 25-103 (SVPGVYKMFG…IKSLKPKYNI (79 aa)). The UVR domain maps to 214–249 (KEIQCELFEMMCRFSNNQDYESAIVCRDRLHALKSM).

This sequence belongs to the UvrC family. Interacts with UvrB in an incision complex.

It localises to the cytoplasm. Its function is as follows. The UvrABC repair system catalyzes the recognition and processing of DNA lesions. UvrC both incises the 5' and 3' sides of the lesion. The N-terminal half is responsible for the 3' incision and the C-terminal half is responsible for the 5' incision. The chain is UvrABC system protein C from Anaplasma phagocytophilum (strain HZ).